The sequence spans 343 residues: MSFVFPSWSTAFSPAFHEDAKAMLEGALNKGDKPPVIQGKIEVVELHMGEQPPTLTLLEIGDLSIDRFRGILRLGYQGDAWLEVRCRVQANPLSHNPHLTFSTLPLSTPLLASQPLLVPMTLRLSKLHLRAILILVVSASKGITLVFKNDPLQNVDVSSTFDSVEVIRGYLQQEIEGQLREMFREHLPGIIHRLSQKWFSGSGVGGKVEMPYRDMSPVPSYAPINEEVEEEENEENHGTSPGNEESFPPRHIGPGGITLPLNNSVSQLAALSYSAHTLSPYARGHEHIAVRSFPYLGKSGAGTGSSGRASLASSSVGEGDIKAKRKRIFRIGKSKEADEKSEA.

The region spanning 1–196 (MSFVFPSWST…LPGIIHRLSQ (196 aa)) is the SMP-LTD domain. Disordered stretches follow at residues 227–255 (EVEEEENEENHGTSPGNEESFPPRHIGPG) and 300–325 (GAGTGSSGRASLASSSVGEGDIKAKR). The segment covering 306–317 (SGRASLASSSVG) has biased composition (low complexity).

The protein belongs to the MDM34 family. Component of the ER-mitochondria encounter structure (ERMES) or MDM complex, composed of MMM1, MDM10, MDM12 and MDM34.

Its subcellular location is the mitochondrion outer membrane. Functionally, component of the ERMES/MDM complex, which serves as a molecular tether to connect the endoplasmic reticulum (ER) and mitochondria. Components of this complex are involved in the control of mitochondrial shape and protein biogenesis, and function in nonvesicular lipid trafficking between the ER and mitochondria. MDM34 is required for the interaction of the ER-resident membrane protein MMM1 and the outer mitochondrial membrane-resident beta-barrel protein MDM10. The polypeptide is Mitochondrial distribution and morphology protein 34 (Cryptococcus neoformans var. neoformans serotype D (strain B-3501A) (Filobasidiella neoformans)).